The following is a 383-amino-acid chain: Large ribosomal subunit protein uL2m (383 aa).

2 disordered regions span residues 97–122 (FPKK…GGGH) and 322–357 (MNAN…YKTR). Basic residues-rich tracts occupy residues 106 to 122 (GRNH…GGGH) and 330 to 340 (GGGRGKSKGNR).

It belongs to the universal ribosomal protein uL2 family. In terms of assembly, component of the mitochondrial large ribosomal subunit (mt-LSU). Mature N.crassa 74S mitochondrial ribosomes consist of a small (37S) and a large (54S) subunit. The 37S small subunit contains a 16S ribosomal RNA (16S mt-rRNA) and 32 different proteins. The 54S large subunit contains a 23S rRNA (23S mt-rRNA) and 42 different proteins.

The protein localises to the mitochondrion. Component of the mitochondrial ribosome (mitoribosome), a dedicated translation machinery responsible for the synthesis of mitochondrial genome-encoded proteins, including at least some of the essential transmembrane subunits of the mitochondrial respiratory chain. The mitoribosomes are attached to the mitochondrial inner membrane and translation products are cotranslationally integrated into the membrane. The sequence is that of Large ribosomal subunit protein uL2m (rml2) from Neurospora crassa (strain ATCC 24698 / 74-OR23-1A / CBS 708.71 / DSM 1257 / FGSC 987).